The sequence spans 168 residues: Transcriptional regulator MraZ (168 aa).

2 SpoVT-AbrB domains span residues 8 to 51 (EYNQ…GGDR) and 90 to 140 (ALNM…KADT).

Belongs to the MraZ family. Forms oligomers.

It is found in the cytoplasm. It localises to the nucleoid. The chain is Transcriptional regulator MraZ from Cereibacter sphaeroides (strain ATCC 17025 / ATH 2.4.3) (Rhodobacter sphaeroides).